A 548-amino-acid polypeptide reads, in one-letter code: Chaperonin GroEL (548 aa).

Residues 30–33 (TLGP), Lys51, 87–91 (DGTTT), Gly415, and Asp496 each bind ATP.

The protein belongs to the chaperonin (HSP60) family. In terms of assembly, forms a cylinder of 14 subunits composed of two heptameric rings stacked back-to-back. Interacts with the co-chaperonin GroES.

Its subcellular location is the cytoplasm. It catalyses the reaction ATP + H2O + a folded polypeptide = ADP + phosphate + an unfolded polypeptide.. Its function is as follows. Together with its co-chaperonin GroES, plays an essential role in assisting protein folding. The GroEL-GroES system forms a nano-cage that allows encapsulation of the non-native substrate proteins and provides a physical environment optimized to promote and accelerate protein folding. The sequence is that of Chaperonin GroEL from Haemophilus influenzae (strain ATCC 51907 / DSM 11121 / KW20 / Rd).